The primary structure comprises 298 residues: Acetylglutamate kinase (298 aa).

Substrate contacts are provided by residues 69–70 (GG), R91, and N191.

The protein belongs to the acetylglutamate kinase family. ArgB subfamily.

It is found in the cytoplasm. The catalysed reaction is N-acetyl-L-glutamate + ATP = N-acetyl-L-glutamyl 5-phosphate + ADP. It participates in amino-acid biosynthesis; L-arginine biosynthesis; N(2)-acetyl-L-ornithine from L-glutamate: step 2/4. Catalyzes the ATP-dependent phosphorylation of N-acetyl-L-glutamate. The sequence is that of Acetylglutamate kinase from Neisseria gonorrhoeae (strain ATCC 700825 / FA 1090).